Reading from the N-terminus, the 429-residue chain is Phosphomethylpyrimidine synthase (429 aa).

Substrate contacts are provided by residues N66, M95, Y124, H163, 185 to 187 (SRG), 226 to 229 (DGLR), and E265. H269 lines the Zn(2+) pocket. Position 292 (Y292) interacts with substrate. Zn(2+) is bound at residue H333. 3 residues coordinate [4Fe-4S] cluster: C409, C412, and C416.

It belongs to the ThiC family. [4Fe-4S] cluster is required as a cofactor.

It carries out the reaction 5-amino-1-(5-phospho-beta-D-ribosyl)imidazole + S-adenosyl-L-methionine = 4-amino-2-methyl-5-(phosphooxymethyl)pyrimidine + CO + 5'-deoxyadenosine + formate + L-methionine + 3 H(+). It functions in the pathway cofactor biosynthesis; thiamine diphosphate biosynthesis. Its function is as follows. Catalyzes the synthesis of the hydroxymethylpyrimidine phosphate (HMP-P) moiety of thiamine from aminoimidazole ribotide (AIR) in a radical S-adenosyl-L-methionine (SAM)-dependent reaction. This is Phosphomethylpyrimidine synthase from Carboxydothermus hydrogenoformans (strain ATCC BAA-161 / DSM 6008 / Z-2901).